A 177-amino-acid chain; its full sequence is Large ribosomal subunit protein uL6 (177 aa).

It belongs to the universal ribosomal protein uL6 family. Part of the 50S ribosomal subunit.

Functionally, this protein binds to the 23S rRNA, and is important in its secondary structure. It is located near the subunit interface in the base of the L7/L12 stalk, and near the tRNA binding site of the peptidyltransferase center. This chain is Large ribosomal subunit protein uL6, found in Psychrobacter arcticus (strain DSM 17307 / VKM B-2377 / 273-4).